Reading from the N-terminus, the 255-residue chain is Menaquinol:cytochrome c reductase cytochrome c subunit (255 aa).

A run of 3 helical transmembrane segments spans residues 46–62, 104–124, and 137–157; these read WMVG…LTIV, VVGA…APFL, and VAVG…WQSV. One can recognise a Cytochrome c domain in the interval 178-253; it reads DTNAEGYKVF…ELAKFISETT (76 aa). C192, C195, and H196 together coordinate heme c.

This sequence belongs to the cytochrome b family. As to quaternary structure, the main subunits of the menaquinol:cytochrome c complex are a Rieske-type iron-sulfur protein (QcrA), a cytochrome b (QcrB) and a cytochrome c (QcrC). Heme c is required as a cofactor.

The protein resides in the cell membrane. Functionally, component of the menaquinol:cytochrome c reductase complex. This Bacillus subtilis (strain 168) protein is Menaquinol:cytochrome c reductase cytochrome c subunit (qcrC).